A 375-amino-acid polypeptide reads, in one-letter code: ATP phosphoribosyltransferase regulatory subunit (375 aa).

This sequence belongs to the class-II aminoacyl-tRNA synthetase family. HisZ subfamily. As to quaternary structure, heteromultimer composed of HisG and HisZ subunits.

It is found in the cytoplasm. It participates in amino-acid biosynthesis; L-histidine biosynthesis; L-histidine from 5-phospho-alpha-D-ribose 1-diphosphate: step 1/9. Functionally, required for the first step of histidine biosynthesis. May allow the feedback regulation of ATP phosphoribosyltransferase activity by histidine. The chain is ATP phosphoribosyltransferase regulatory subunit from Agrobacterium fabrum (strain C58 / ATCC 33970) (Agrobacterium tumefaciens (strain C58)).